The sequence spans 205 residues: Small ribosomal subunit protein uS4B (205 aa).

Residues 94–157 (RRLDNVVFRA…LNLPIVLGTL (64 aa)) form the S4 RNA-binding domain.

It belongs to the universal ribosomal protein uS4 family. As to quaternary structure, part of the 30S ribosomal subunit. Contacts protein S5. The interaction surface between S4 and S5 is involved in control of translational fidelity.

Functionally, one of the primary rRNA binding proteins, it binds directly to 16S rRNA where it nucleates assembly of the body of the 30S subunit. In terms of biological role, with S5 and S12 plays an important role in translational accuracy. This is Small ribosomal subunit protein uS4B from Nitrosomonas europaea (strain ATCC 19718 / CIP 103999 / KCTC 2705 / NBRC 14298).